Reading from the N-terminus, the 552-residue chain is Arginine--tRNA ligase (552 aa).

A 'HIGH' region motif is present at residues 123 to 133; that stretch reads ANPTGPLTIGR.

The protein belongs to the class-I aminoacyl-tRNA synthetase family. As to quaternary structure, monomer.

The protein resides in the cytoplasm. It carries out the reaction tRNA(Arg) + L-arginine + ATP = L-arginyl-tRNA(Arg) + AMP + diphosphate. The chain is Arginine--tRNA ligase from Chlorobium luteolum (strain DSM 273 / BCRC 81028 / 2530) (Pelodictyon luteolum).